Here is a 215-residue protein sequence, read N- to C-terminus: 7-cyano-7-deazaguanine synthase (215 aa).

Position 8-18 (8-18 (LSAGLDSTVSL)) interacts with ATP. 4 residues coordinate Zn(2+): C191, C199, C202, and C205.

This sequence belongs to the QueC family. In terms of assembly, homodimer. Zn(2+) is required as a cofactor.

It carries out the reaction 7-carboxy-7-deazaguanine + NH4(+) + ATP = 7-cyano-7-deazaguanine + ADP + phosphate + H2O + H(+). The protein operates within purine metabolism; 7-cyano-7-deazaguanine biosynthesis. Catalyzes the ATP-dependent conversion of 7-carboxy-7-deazaguanine (CDG) to 7-cyano-7-deazaguanine (preQ(0)). The protein is 7-cyano-7-deazaguanine synthase of Carboxydothermus hydrogenoformans (strain ATCC BAA-161 / DSM 6008 / Z-2901).